The following is a 298-amino-acid chain: Lipoyl synthase (298 aa).

Positions 40, 45, 51, 67, 71, 74, and 280 each coordinate [4Fe-4S] cluster. The region spanning 53–269 is the Radical SAM core domain; sequence AVRRTATFMI…KEIALSKGFS (217 aa).

The protein belongs to the radical SAM superfamily. Lipoyl synthase family. Requires [4Fe-4S] cluster as cofactor.

It localises to the cytoplasm. It catalyses the reaction [[Fe-S] cluster scaffold protein carrying a second [4Fe-4S](2+) cluster] + N(6)-octanoyl-L-lysyl-[protein] + 2 oxidized [2Fe-2S]-[ferredoxin] + 2 S-adenosyl-L-methionine + 4 H(+) = [[Fe-S] cluster scaffold protein] + N(6)-[(R)-dihydrolipoyl]-L-lysyl-[protein] + 4 Fe(3+) + 2 hydrogen sulfide + 2 5'-deoxyadenosine + 2 L-methionine + 2 reduced [2Fe-2S]-[ferredoxin]. It functions in the pathway protein modification; protein lipoylation via endogenous pathway; protein N(6)-(lipoyl)lysine from octanoyl-[acyl-carrier-protein]. Catalyzes the radical-mediated insertion of two sulfur atoms into the C-6 and C-8 positions of the octanoyl moiety bound to the lipoyl domains of lipoate-dependent enzymes, thereby converting the octanoylated domains into lipoylated derivatives. This chain is Lipoyl synthase, found in Geobacillus kaustophilus (strain HTA426).